Here is a 490-residue protein sequence, read N- to C-terminus: Capsid protein (490 aa).

Residues 79-143 form a disordered region; that stretch reads GETSEEESDS…TQPKTIPGQK (65 aa). The segment covering 81-94 has biased composition (acidic residues); sequence TSEEESDSGEEPEF. Over residues 95–111 the composition is skewed to basic and acidic residues; the sequence is EQVRMDRTGGTEIPKEE. Residues 122–125 carry the Nuclear localization signal motif; it reads RKRK. The CCHC-type zinc finger occupies 411-428; that stretch reads CRCWICNIEGHYANECPN. A disordered region spans residues 464-490; sequence YKEEEEETSTEEDDGSSTSEDSDSESD. A compositionally biased stretch (acidic residues) spans 465 to 490; it reads KEEEEETSTEEDDGSSTSEDSDSESD.

This sequence belongs to the caulimoviridae capsid protein family. In terms of assembly, interacts (via nuclear localization signal) with host importin alpha.

It localises to the virion. Its subcellular location is the host nucleus. Its function is as follows. Self assembles to form an icosahedral capsid, about 50 nm in diameter, nm, composed of 420 subunits of the viral capsid protein. The capsid encapsulates the genomic dsDNA. Following virus entry into host cell, provides nuclear import of the viral genome. Virus particles do not enter the nucleus, but dock at the nuclear membrane through the interaction with host importins. In Arabidopsis thaliana (Mouse-ear cress), this protein is Capsid protein.